The primary structure comprises 127 residues: Large ribosomal subunit protein bL17 (127 aa).

This sequence belongs to the bacterial ribosomal protein bL17 family. In terms of assembly, part of the 50S ribosomal subunit. Contacts protein L32.

The polypeptide is Large ribosomal subunit protein bL17 (Pediococcus pentosaceus (strain ATCC 25745 / CCUG 21536 / LMG 10740 / 183-1w)).